We begin with the raw amino-acid sequence, 236 residues long: Sugar fermentation stimulation protein homolog (236 aa).

Belongs to the SfsA family.

The polypeptide is Sugar fermentation stimulation protein homolog (Pseudomonas fluorescens (strain SBW25)).